The sequence spans 571 residues: Potassium-transporting ATPase potassium-binding subunit (571 aa).

The next 11 membrane-spanning stretches (helical) occupy residues 5–25, 64–84, 136–156, 179–199, 254–274, 285–305, 330–350, 357–376, 421–441, 488–508, and 527–547; these read GWIQ…PLGS, LAYT…LYAI, GLTH…VALI, LYVL…QGIP, LSNL…TNVF, WAIL…TYWA, FGIA…CGAV, FTAL…EIII, MLGI…ATVV, LAIG…AIAG, and GGLF…LTFF.

This sequence belongs to the KdpA family. As to quaternary structure, the system is composed of three essential subunits: KdpA, KdpB and KdpC.

It is found in the cell inner membrane. In terms of biological role, part of the high-affinity ATP-driven potassium transport (or Kdp) system, which catalyzes the hydrolysis of ATP coupled with the electrogenic transport of potassium into the cytoplasm. This subunit binds the periplasmic potassium ions and delivers the ions to the membrane domain of KdpB through an intramembrane tunnel. This Methylobacterium radiotolerans (strain ATCC 27329 / DSM 1819 / JCM 2831 / NBRC 15690 / NCIMB 10815 / 0-1) protein is Potassium-transporting ATPase potassium-binding subunit.